The primary structure comprises 157 residues: Small ribosomal subunit protein uS7 (157 aa).

Belongs to the universal ribosomal protein uS7 family. In terms of assembly, part of the 30S ribosomal subunit. Contacts proteins S9 and S11.

Functionally, one of the primary rRNA binding proteins, it binds directly to 16S rRNA where it nucleates assembly of the head domain of the 30S subunit. Is located at the subunit interface close to the decoding center, probably blocks exit of the E-site tRNA. In Chlamydia felis (strain Fe/C-56) (Chlamydophila felis), this protein is Small ribosomal subunit protein uS7.